The sequence spans 702 residues: Autophagy-related protein 9 (702 aa).

Over 1-205 (MFYQPAQNKK…GKGLSCIIVH (205 aa)) the chain is Cytoplasmic. Residues 35–128 (QESLDSDEDE…SKQKPALPNF (94 aa)) form a disordered region. A compositionally biased stretch (acidic residues) spans 38–47 (LDSDEDESSP). Residues 94 to 107 (SSKVPSKHPSPSFP) are compositionally biased toward low complexity. Residues 108-120 (ETTSLRNLQNGSK) show a composition bias toward polar residues. The helical transmembrane segment at 206–223 (RLFQILTVSFVIGFTTFI) threads the bilayer. The Lumenal portion of the chain corresponds to 224 to 251 (TSCIDWPAVTPHGSLAGVTKSQCIAQMS). The helical transmembrane segment at 252–270 (PITYLVLWLFLSFLLALWI) threads the bilayer. Over 271-421 (YYLTDIPRLW…RRRFIVAGFL (151 aa)) the chain is Cytoplasmic. The stretch at 422-446 (NCLFAPIVAIYLVIHNFFRYFNEYH) is an intramembrane region. Residues 447–496 (KNPGALSTRRYTPLALWTFREYNELQHFFDERINDSYAAASHYVSQFPDF) lie on the Cytoplasmic side of the membrane. A helical transmembrane segment spans residues 497 to 522 (NMIRLFKYISFILGSFTAILVIITVF). The Lumenal portion of the chain corresponds to 523–537 (DPELMVTFEITKDRS). Residues 538–555 (VLFYLGLFGSLIAVSRSI) traverse the membrane as a helical segment. Residues 556–603 (IPDETLVFAPEKALRRVITFTHYMPGWWSDNMHSKAVQQEFCSLYSYR) lie on the Cytoplasmic side of the membrane. Residues 604–624 (IVNLLWEILGILLTPVLLFFT) lie within the membrane without spanning it. Topologically, residues 625–702 (FPSCSQDIVD…NTEAPRRDLR (78 aa)) are cytoplasmic.

The protein belongs to the ATG9 family. Homotrimer; forms a homotrimer with a central pore that forms a path between the two membrane leaflets. Interacts with ctl1. Post-translationally, phosphorylated by atg1. Atg1 phosphorylation is required for preautophagosome elongation.

The protein localises to the preautophagosomal structure membrane. It localises to the cytoplasmic vesicle membrane. The protein resides in the golgi apparatus membrane. Its subcellular location is the endoplasmic reticulum membrane. It catalyses the reaction a 1,2-diacyl-sn-glycero-3-phosphocholine(in) = a 1,2-diacyl-sn-glycero-3-phosphocholine(out). The enzyme catalyses a 1,2-diacyl-sn-glycero-3-phospho-L-serine(in) = a 1,2-diacyl-sn-glycero-3-phospho-L-serine(out). The catalysed reaction is a 1,2-diacyl-sn-glycero-3-phosphoethanolamine(in) = a 1,2-diacyl-sn-glycero-3-phosphoethanolamine(out). It carries out the reaction a 1,2-diacyl-sn-glycero-3-phospho-(1D-myo-inositol-3-phosphate)(in) = a 1,2-diacyl-sn-glycero-3-phospho-(1D-myo-inositol-3-phosphate)(out). Functionally, phospholipid scramblase involved in autophagy and cytoplasm to vacuole transport (Cvt) vesicle formation. Cycles between the preautophagosomal structure/phagophore assembly site (PAS) and the cytoplasmic vesicle pool and supplies membrane for the growing autophagosome. Lipid scramblase activity plays a key role in preautophagosomal structure/phagophore assembly by distributing the phospholipids that arrive through atg2 from the cytoplasmic to the luminal leaflet of the bilayer, thereby driving autophagosomal membrane expansion. Also involved in endoplasmic reticulum-specific autophagic process and is essential for the survival of cells subjected to severe ER stress. Different machineries are required for anterograde trafficking to the PAS during either the Cvt pathway or bulk autophagy and for retrograde trafficking. Has a role in meiosis and sporulation. The chain is Autophagy-related protein 9 from Schizosaccharomyces pombe (strain 972 / ATCC 24843) (Fission yeast).